We begin with the raw amino-acid sequence, 544 residues long: L-aspartate oxidase (544 aa).

Residues 17–20, lysine 39, 46–53, and aspartate 221 each bind FAD; these read SGGA and STFYAQGG. The active-site Proton donor/acceptor is arginine 288. FAD is bound by residues glutamate 373 and 389–390; that span reads SL.

It belongs to the FAD-dependent oxidoreductase 2 family. NadB subfamily. FAD serves as cofactor.

Its subcellular location is the cytoplasm. The enzyme catalyses L-aspartate + O2 = iminosuccinate + H2O2. The protein operates within cofactor biosynthesis; NAD(+) biosynthesis; iminoaspartate from L-aspartate (oxidase route): step 1/1. In terms of biological role, catalyzes the oxidation of L-aspartate to iminoaspartate, the first step in the de novo biosynthesis of NAD(+). The protein is L-aspartate oxidase of Acinetobacter baylyi (strain ATCC 33305 / BD413 / ADP1).